The sequence spans 76 residues: Acyl carrier protein (76 aa).

The region spanning 1-75 is the Carrier domain; the sequence is MVFEKIKALI…DIVFYITKNT (75 aa). At Ser35 the chain carries O-(pantetheine 4'-phosphoryl)serine.

This sequence belongs to the acyl carrier protein (ACP) family. 4'-phosphopantetheine is transferred from CoA to a specific serine of apo-ACP by AcpS. This modification is essential for activity because fatty acids are bound in thioester linkage to the sulfhydryl of the prosthetic group.

It is found in the cytoplasm. Its pathway is lipid metabolism; fatty acid biosynthesis. In terms of biological role, carrier of the growing fatty acid chain in fatty acid biosynthesis. The protein is Acyl carrier protein of Onion yellows phytoplasma (strain OY-M).